The primary structure comprises 405 residues: Nicotinate phosphoribosyltransferase (405 aa).

Histidine 230 is subject to Phosphohistidine; by autocatalysis.

It belongs to the NAPRTase family. In terms of processing, transiently phosphorylated on a His residue during the reaction cycle. Phosphorylation strongly increases the affinity for substrates and increases the rate of nicotinate D-ribonucleotide production. Dephosphorylation regenerates the low-affinity form of the enzyme, leading to product release.

It catalyses the reaction nicotinate + 5-phospho-alpha-D-ribose 1-diphosphate + ATP + H2O = nicotinate beta-D-ribonucleotide + ADP + phosphate + diphosphate. Its pathway is cofactor biosynthesis; NAD(+) biosynthesis; nicotinate D-ribonucleotide from nicotinate: step 1/1. Its function is as follows. Catalyzes the synthesis of beta-nicotinate D-ribonucleotide from nicotinate and 5-phospho-D-ribose 1-phosphate at the expense of ATP. The polypeptide is Nicotinate phosphoribosyltransferase (Bordetella pertussis (strain Tohama I / ATCC BAA-589 / NCTC 13251)).